The following is a 232-amino-acid chain: MQKNAAHTYAISSLLVLSLTGCAWIPSTPLVQGATSAQPVPGPTPVANGSIFQSAQPINYGYQPLFEDRRPRNIGDTLTIVLQENVSASKSSSANASRDGKTNFGFDTVPRYLQGLFGNARADVEASGGNTFNGKGGANASNTFSGTLTVTVDQVLVNGNLHVVGEKQIAINQGTEFIRFSGVVNPRTISGSNTVPSTQVVDARIEYVGNGYINEAQNMGWLQHFFLNLSPM.

A signal peptide spans 1 to 21 (MQKNAAHTYAISSLLVLSLTG). The N-palmitoyl cysteine moiety is linked to residue Cys22. Cys22 carries S-diacylglycerol cysteine lipidation.

The protein belongs to the FlgH family. As to quaternary structure, the basal body constitutes a major portion of the flagellar organelle and consists of four rings (L,P,S, and M) mounted on a central rod.

The protein localises to the cell outer membrane. It localises to the bacterial flagellum basal body. Functionally, assembles around the rod to form the L-ring and probably protects the motor/basal body from shearing forces during rotation. This Shigella boydii serotype 4 (strain Sb227) protein is Flagellar L-ring protein.